Consider the following 166-residue polypeptide: Ribonuclease H (166 aa).

The RNase H type-1 domain occupies 5–147 (PRKRVALFTD…VDREARRQAQ (143 aa)). Mg(2+) contacts are provided by D14, E52, D74, and D139. The interval 128 to 166 (GHTGHPENERVDREARRQAQSQAKTPCPPQAPTLFHEEA) is disordered. The span at 131–144 (GHPENERVDREARR) shows a compositional bias: basic and acidic residues.

Belongs to the RNase H family. As to quaternary structure, monomer. The cofactor is Mg(2+).

It is found in the cytoplasm. The enzyme catalyses Endonucleolytic cleavage to 5'-phosphomonoester.. In terms of biological role, endonuclease that specifically degrades the RNA of RNA-DNA hybrids. In Thermus thermophilus (strain ATCC BAA-163 / DSM 7039 / HB27), this protein is Ribonuclease H.